The chain runs to 159 residues: Mediator of RNA polymerase II transcription subunit 10 (159 aa).

A disordered region spans residues serine 54–leucine 77.

It belongs to the Mediator complex subunit 10 family. Component of the Mediator complex.

Its subcellular location is the nucleus. Its function is as follows. Component of the Mediator complex, a coactivator involved in the regulated transcription of nearly all RNA polymerase II-dependent genes. Mediator functions as a bridge to convey information from gene-specific regulatory proteins to the basal RNA polymerase II transcription machinery. Mediator is recruited to promoters by direct interactions with regulatory proteins and serves as a scaffold for the assembly of a functional preinitiation complex with RNA polymerase II and the general transcription factors. This chain is Mediator of RNA polymerase II transcription subunit 10 (nut2), found in Aspergillus fumigatus (strain ATCC MYA-4609 / CBS 101355 / FGSC A1100 / Af293) (Neosartorya fumigata).